A 505-amino-acid polypeptide reads, in one-letter code: Photosystem II CP47 reaction center protein (505 aa).

Over 1-19 the chain is Cytoplasmic; sequence GLPWYRVHTVLINDPGRLI. 5 residues coordinate chlorophyll a: His-8, His-22, His-25, His-99, and His-113. A helical transmembrane segment spans residues 20–35; sequence AAHLMHTALVAGWAGS. Residues 36 to 99 are Lumenal-facing; the sequence is MALYELATFD…WSFEGVALAH (64 aa). A helical membrane pass occupies residues 100–114; that stretch reads IVLSGLLFLAACWHW. Residues 115 to 138 are Cytoplasmic-facing; sequence VYWDLELFRDPRTGEPALDLPKMF. The chain crosses the membrane as a helical span at residues 139–155; that stretch reads GIHLFLAGLLCFGFGAF. Chlorophyll a-binding residues include His-141, His-156, His-200, His-201, and His-215. Over 156–201 the chain is Lumenal; the sequence is HLTGLFGPGMWVSDPYGLTGSVQPVAPEWGPDGFNPYNPGGVVAHH. Residues 202–217 form a helical membrane-spanning segment; it reads IAAGIVGIIAGLFHIL. Residues 218–235 are Cytoplasmic-facing; that stretch reads VRPPQRLYKALRMGNIET. The helical transmembrane segment at 236-251 threads the bilayer; sequence VLSSSIAAVFFAAFVV. Topologically, residues 252–455 are lumenal; it reads AGTMWYGSAT…PRGWFTFAHA (204 aa). Residues His-454, His-465, and His-468 each contribute to the chlorophyll a site. The helical transmembrane segment at 456–471 threads the bilayer; it reads VFALLFFFGHIWHGAR. Over 472–505 the chain is Cytoplasmic; sequence TLFRDVFSGIDPELSPEQVEWGFYQKVGDVTTRK.

It belongs to the PsbB/PsbC family. PsbB subfamily. PSII is composed of 1 copy each of membrane proteins PsbA, PsbB, PsbC, PsbD, PsbE, PsbF, PsbH, PsbI, PsbJ, PsbK, PsbL, PsbM, PsbT, PsbX, PsbY, PsbZ, Psb30/Ycf12, peripheral proteins PsbO, CyanoQ (PsbQ), PsbU, PsbV and a large number of cofactors. It forms dimeric complexes. Binds multiple chlorophylls. PSII binds additional chlorophylls, carotenoids and specific lipids. serves as cofactor.

It localises to the cellular thylakoid membrane. In terms of biological role, one of the components of the core complex of photosystem II (PSII). It binds chlorophyll and helps catalyze the primary light-induced photochemical processes of PSII. PSII is a light-driven water:plastoquinone oxidoreductase, using light energy to abstract electrons from H(2)O, generating O(2) and a proton gradient subsequently used for ATP formation. This chain is Photosystem II CP47 reaction center protein, found in Thermostichus vulcanus (Synechococcus vulcanus).